The chain runs to 85 residues: Large ribosomal subunit protein bL31B (85 aa).

This sequence belongs to the bacterial ribosomal protein bL31 family. Type B subfamily. As to quaternary structure, part of the 50S ribosomal subunit.

This Clavibacter michiganensis subsp. michiganensis (strain NCPPB 382) protein is Large ribosomal subunit protein bL31B.